Reading from the N-terminus, the 581-residue chain is MKTLLTILTVGSLAAHTTVDTSGLLQHVKFQSSNFENILTWDGGPASTSDTVYSVEYKKYGERKWLAKAGCQRITQKFCNLTMETRNHTEFYYAKVTAVSAGGPPVTKMTDRFSSLQHTTIKPPDVTCIPKVRSIQMLVHPTLTPVLSEDGHQLTLEEIFHDLFYRLELHVNHTYQMHLEGKQREYEFLGLTPDTEFLGSITILTPILSKESAPYVCRVKTLPDRTWAYSFSGAVLFSMGFLVGLLCYLGYKYITKPPVPPNSLNVQRVLTFQPLRFIQEHVLIPVLDLSGPSSLPQPIQYSQVVVSGPREPPGAVWRQSLSDLTYVGQSDVSILQPTNVPAQQTLSPPSYAPKAVPEVQPPSYAPQVASDAKALFYSPQQGMKTRPATYDPQDILDSCPASYAVCVEDSGKDSTPGILSTPKYLKTKGQLQEDTLVRSCLPGDLSLQKVTSLGEGETQRPKSLPSPLGFCTDRGPDLHTLRSEEPETPRYLKGALSLLSSVQIEGHPVSLPLHVHSVSCSPSDEGPSPWGLLDSLVCPKDEGPAVETEAMCPSAAASELEQSTELDSLFKGLALTVQWES.

The first 15 residues, 1 to 15 (MKTLLTILTVGSLAA), serve as a signal peptide directing secretion. Residues 16 to 230 (HTTVDTSGLL…TLPDRTWAYS (215 aa)) lie on the Extracellular side of the membrane. 2 Fibronectin type-III domains span residues 18–115 (TVDT…RFSS) and 141–221 (PTLT…RVKT). C71 and C79 are joined by a disulfide. N-linked (GlcNAc...) asparagine glycans are attached at residues N80 and N172. Residues C128 and C217 are joined by a disulfide bond. The helical transmembrane segment at 231–251 (FSGAVLFSMGFLVGLLCYLGY) threads the bilayer. The Cytoplasmic segment spans residues 252 to 581 (KYITKPPVPP…GLALTVQWES (330 aa)). Residues 343–364 (QQTLSPPSYAPKAVPEVQPPSY) form a disordered region. 2 positions are modified to phosphoserine; by GSK3-beta: S410 and S414. Residue K449 forms a Glycyl lysine isopeptide (Lys-Gly) (interchain with G-Cter in ubiquitin) linkage.

The protein belongs to the type II cytokine receptor family. In terms of assembly, heterodimer with IL10RB and with IL20RB. In terms of processing, phosphorylated by GSK3-BETA and MAPK; phosphorylation by GSK3-BETA stabilizes IL22RA1 by preventing its proteasomal degradation. Expressed in kidney, liver and lung.

The protein resides in the cell membrane. Functionally, component of the receptor for IL20, IL22 and IL24. Component of IL22 receptor formed by IL22RA1 and IL10RB enabling IL22 signaling via JAK/STAT pathways. IL22 also induces activation of MAPK1/MAPK3 and Akt kinases pathways. Component of one of the receptor for IL20 and IL24 formed by IL22RA1 and IL20RB also signaling through STATs activation. Mediates IL24 antiangiogenic activity as well as IL24 inhibitory effect on endothelial cell tube formation and differentiation. This chain is Interleukin-22 receptor subunit alpha-1 (Il22ra1), found in Mus musculus (Mouse).